Reading from the N-terminus, the 479-residue chain is Ribosomal RNA small subunit methyltransferase F (479 aa).

S-adenosyl-L-methionine-binding positions include 125 to 131 (AAAPGSK), E149, D176, and D194. C247 functions as the Nucleophile in the catalytic mechanism.

The protein belongs to the class I-like SAM-binding methyltransferase superfamily. RsmB/NOP family.

Its subcellular location is the cytoplasm. The enzyme catalyses cytidine(1407) in 16S rRNA + S-adenosyl-L-methionine = 5-methylcytidine(1407) in 16S rRNA + S-adenosyl-L-homocysteine + H(+). Its function is as follows. Specifically methylates the cytosine at position 1407 (m5C1407) of 16S rRNA. This chain is Ribosomal RNA small subunit methyltransferase F, found in Escherichia fergusonii (strain ATCC 35469 / DSM 13698 / CCUG 18766 / IAM 14443 / JCM 21226 / LMG 7866 / NBRC 102419 / NCTC 12128 / CDC 0568-73).